A 59-amino-acid chain; its full sequence is Large ribosomal subunit protein uL30 (59 aa).

Belongs to the universal ribosomal protein uL30 family. Part of the 50S ribosomal subunit.

This chain is Large ribosomal subunit protein uL30, found in Rhodococcus jostii (strain RHA1).